Reading from the N-terminus, the 638-residue chain is NBPF family member NBPF4 (638 aa).

Coiled-coil stretches lie at residues S10–L43 and D69–E115. The segment at H157–N285 is disordered. Over residues E165 to E179 the composition is skewed to acidic residues. The Olduvai 1 domain occupies E174 to P261. Over residues E192–P202 the composition is skewed to basic and acidic residues. Low complexity predominate over residues S214–H226. Composition is skewed to basic and acidic residues over residues T232–D251 and Q264–K273. 2 consecutive Olduvai domains span residues E326–D399 and K400–Q503. The interval G562–R584 is disordered.

Belongs to the NBPF family. In terms of tissue distribution, expressed in testis.

The protein resides in the cytoplasm. This Homo sapiens (Human) protein is NBPF family member NBPF4.